Consider the following 268-residue polypeptide: Aliphatic sulfonates import ATP-binding protein SsuB 2 (268 aa).

The 222-residue stretch at 15-236 (LAVRKLQKTF…VRGSHRLAAL (222 aa)) folds into the ABC transporter domain. An ATP-binding site is contributed by 47–54 (GRSGCGKS).

This sequence belongs to the ABC transporter superfamily. Aliphatic sulfonates importer (TC 3.A.1.17.2) family. The complex is composed of two ATP-binding proteins (SsuB), two transmembrane proteins (SsuC) and a solute-binding protein (SsuA).

The protein resides in the cell inner membrane. The catalysed reaction is ATP + H2O + aliphatic sulfonate-[sulfonate-binding protein]Side 1 = ADP + phosphate + aliphatic sulfonateSide 2 + [sulfonate-binding protein]Side 1.. In terms of biological role, part of the ABC transporter complex SsuABC involved in aliphatic sulfonates import. Responsible for energy coupling to the transport system. This Pseudomonas fluorescens (strain ATCC BAA-477 / NRRL B-23932 / Pf-5) protein is Aliphatic sulfonates import ATP-binding protein SsuB 2.